The following is a 131-amino-acid chain: MHISLPTRNKSYFRIRTRTYQIGLYHSDSSPIRDISVLHLLIATLCTIFFPIFFSLSKVQVVQWQGTTISKNCIALTMSFPLNAIPGMYLIIAFPRLQTVIPLQRNTPVRITKSVIVKGAVSVPRISSPMH.

A run of 2 helical transmembrane segments spans residues 35-55 (ISVL…IFFS) and 74-94 (IALT…IIAF).

The protein localises to the membrane. This Saccharomyces cerevisiae (strain ATCC 204508 / S288c) (Baker's yeast) protein is Increased copper sensitivity protein 3 (ICS3).